The sequence spans 429 residues: Proton extrusion protein PxcA (429 aa).

Residues Leu139 to Val161 form a disordered region. Over residues Asp150 to Val161 the composition is skewed to basic and acidic residues. Transmembrane regions (helical) follow at residues Phe211–Thr231, Ala306–Ile326, Leu353–Ile373, and Phe389–Ile409.

This sequence belongs to the CemA family.

The protein resides in the cell inner membrane. Its function is as follows. Required for H(+) efflux immediately after light irradiation to form a rapid H(+) concentration gradient across the thylakoid membranes. Together with PxcL, contributes to transient H(+) uptake following dark to light transition. In Picosynechococcus sp. (strain ATCC 27264 / PCC 7002 / PR-6) (Agmenellum quadruplicatum), this protein is Proton extrusion protein PxcA.